A 338-amino-acid polypeptide reads, in one-letter code: DNA-directed RNA polymerase subunit alpha (338 aa).

The segment at 1 to 233 (MLREEVAVST…DLFIPFLHAE (233 aa)) is alpha N-terminal domain (alpha-NTD). The alpha C-terminal domain (alpha-CTD) stretch occupies residues 266–338 (IALKFIFIDQ…IDLPKNKFSN (73 aa)).

It belongs to the RNA polymerase alpha chain family. As to quaternary structure, in plastids the minimal PEP RNA polymerase catalytic core is composed of four subunits: alpha, beta, beta', and beta''. When a (nuclear-encoded) sigma factor is associated with the core the holoenzyme is formed, which can initiate transcription.

The protein localises to the plastid. It localises to the chloroplast. The catalysed reaction is RNA(n) + a ribonucleoside 5'-triphosphate = RNA(n+1) + diphosphate. Its function is as follows. DNA-dependent RNA polymerase catalyzes the transcription of DNA into RNA using the four ribonucleoside triphosphates as substrates. The protein is DNA-directed RNA polymerase subunit alpha of Nandina domestica (Heavenly bamboo).